The chain runs to 888 residues: Kinesin-like protein KIF20A (888 aa).

Ser-2 carries the post-translational modification N-acetylserine. 3 positions are modified to phosphoserine: Ser-7, Ser-14, and Ser-21. Residues 63-506 (KVKVYLRVRP…AKFSAIASQL (444 aa)) enclose the Kinesin motor domain. Residue 159–166 (GVTNSGKT) participates in ATP binding. Ser-527 bears the Phosphoserine; by PLK1 mark. At Ser-531 the chain carries Phosphoserine. Coiled coils occupy residues 559–587 (KEEL…EVQL) and 630–760 (ESLT…ERAC). Ser-667, Ser-683, and Ser-823 each carry phosphoserine. Positions 761–888 (CHNTGAGKLR…LKSGPFGKKY (128 aa)) are globular. Residues 823–863 (STKKRLGANQENQQPNQQPPGKKPFLRNLLPRTPTCQSSTD) form a disordered region. Thr-855 carries the phosphothreonine modification. Ser-865, Ser-876, and Ser-881 each carry phosphoserine.

The protein belongs to the TRAFAC class myosin-kinesin ATPase superfamily. Kinesin family. Phosphorylated by PLK1 at Ser-527 during mitosis, creating a docking site for PLK1 and recruiting PLK1 at central spindle.

It localises to the golgi apparatus. The protein localises to the cytoplasm. The protein resides in the cytoskeleton. Its subcellular location is the spindle. Mitotic kinesin required for chromosome passenger complex (CPC)-mediated cytokinesis. Following phosphorylation by PLK1, involved in recruitment of PLK1 to the central spindle. Interacts with guanosine triphosphate (GTP)-bound forms of RAB6A and RAB6B. May act as a motor required for the retrograde RAB6 regulated transport of Golgi membranes and associated vesicles along microtubules. Has a microtubule plus end-directed motility. This Bos taurus (Bovine) protein is Kinesin-like protein KIF20A (KIF20A).